The primary structure comprises 336 residues: Small ribosomal subunit protein uS9m (336 aa).

A disordered region spans residues 32–81; it reads STTTTTTTTTTTTTSDEIPTTKPRFQSRFRRNQQPHQQQRSPYTSSQVTE. Positions 33–45 are enriched in low complexity; sequence TTTTTTTTTTTTT. Residues 65–81 are compositionally biased toward polar residues; that stretch reads QPHQQQRSPYTSSQVTE.

The protein belongs to the universal ribosomal protein uS9 family. As to quaternary structure, component of the mitochondrial small ribosomal subunit (mt-SSU).

The protein resides in the mitochondrion. Component of the mitochondrial ribosome (mitoribosome), a dedicated translation machinery responsible for the synthesis of mitochondrial genome-encoded proteins, including at least some of the essential transmembrane subunits of the mitochondrial respiratory chain. The mitoribosomes are attached to the mitochondrial inner membrane and translation products are cotranslationally integrated into the membrane. The chain is Small ribosomal subunit protein uS9m (MRPS9) from Candida albicans (strain SC5314 / ATCC MYA-2876) (Yeast).